The sequence spans 66 residues: Disk-determining factor A (66 aa).

Involved in cell-shape determination. Required for the formation of disks. The protein is Disk-determining factor A of Haloferax volcanii (strain ATCC 29605 / DSM 3757 / JCM 8879 / NBRC 14742 / NCIMB 2012 / VKM B-1768 / DS2) (Halobacterium volcanii).